A 208-amino-acid chain; its full sequence is MSNPHADRLIAFLISSGIKDQRVLDAMHCLPRESFVSQAMMHQAYDNNALPIGQGQTISQPYIVARMTELLELQRASNVLEIGTGSGYQTAVLAQIVDHVYSVERIKSLQWEAKRRLKQLDIYNVSTKHGDGWLGWETKGPFDAIIVTAAAEVIPQALLSQLKDGGKMVIPVGDAEQQLLRIERKGDEYLSTVVEMVRFVPLVAGDLA.

S59 is an active-site residue.

It belongs to the methyltransferase superfamily. L-isoaspartyl/D-aspartyl protein methyltransferase family.

It localises to the cytoplasm. It catalyses the reaction [protein]-L-isoaspartate + S-adenosyl-L-methionine = [protein]-L-isoaspartate alpha-methyl ester + S-adenosyl-L-homocysteine. Catalyzes the methyl esterification of L-isoaspartyl residues in peptides and proteins that result from spontaneous decomposition of normal L-aspartyl and L-asparaginyl residues. It plays a role in the repair and/or degradation of damaged proteins. The protein is Protein-L-isoaspartate O-methyltransferase of Vibrio parahaemolyticus serotype O3:K6 (strain RIMD 2210633).